Here is a 2559-residue protein sequence, read N- to C-terminus: Nonribosomal peptide synthetase asqK (2559 aa).

An adenylation 1 region spans residues 90 to 474; sequence YRPSHTAIHA…SRKDSQVKIR (385 aa). In terms of domain architecture, Carrier 1 spans 593–669; the sequence is TNIEQLVHEL…SLVHYPAGLE (77 aa). Serine 627 is subject to O-(pantetheine 4'-phosphoryl)serine. A condensation 1 region spans residues 695 to 989; it reads TVEQSFSQAR…GNVQCIRTKV (295 aa). Positions 1155 to 1562 are adenylation 2; that stretch reads FDEQVRAQTD…GRMDQQVKVR (408 aa). The tract at residues 1681–1776 is methyltransferase; sequence LEIGTGSGMI…NTIKDLVRQG (96 aa). The Carrier 2 domain occupies 2090–2164; that stretch reads AFTSEIERAV…GLAQHLQGLG (75 aa). O-(pantetheine 4'-phosphoryl)serine is present on serine 2124. Positions 2261-2409 are condensation 2; sequence FDGVSLSAIL…VNRCLLRVKV (149 aa).

It belongs to the NRP synthetase family.

The enzyme catalyses O-methyl-L-tyrosine + anthranilate + S-adenosyl-L-methionine + 2 ATP = (-)-4'-methoxycyclopeptine + 2 AMP + S-adenosyl-L-homocysteine + 2 diphosphate + 2 H(+). The catalysed reaction is anthranilate + L-phenylalanine + S-adenosyl-L-methionine + 2 ATP = cyclopeptine + 2 AMP + S-adenosyl-L-homocysteine + 2 diphosphate + 2 H(+). Its pathway is secondary metabolite biosynthesis. It functions in the pathway alkaloid biosynthesis. The protein operates within mycotoxin biosynthesis. Nonribosomal peptide synthetase; part of the gene cluster that mediates the biosynthesis of the aspoquinolone mycotoxins. The first stage is catalyzed by the nonribosomal peptide synthetase asqK that condenses anthranilic acid and O-methyl-L-tyrosine to produce 4'-methoxycyclopeptin. AsqK is also able to use anthranilic acid and L-phenylalanine as substrates to produce cyclopeptin, but at a tenfold lower rate. Within the pathway, 4'-methoxycyclopeptin is then converted to 4'-methoxydehydrocyclopeptin by the ketoglutarate-dependent dioxygenase asqJ. AsqJ also converts its first product 4'-methoxydehydrocyclopeptin to 4'-methoxycyclopenin. The following conversion of 4'-methoxycyclopenin into 4'-methoxyviridicatin is catalyzed by the cyclopenase asqI. 4'-methoxyviridicatin is the precursor of quinolone natural products, and is further converted to quinolinone B. The prenyltransferase asqH1 then catalyzes the canonical Friedel-Crafts alkylation of quinolinone B with dimethylallyl cation to yield dimethylallyl quinolone, which is subjected to FAD-dependent dehydrogenation by the FAD-linked oxidoreductase asqF to yield conjugated aryl diene. The delta(3') double bond then serves as the site of the second alkylation with DMAPP catalyzed by the prenyltransferase asqH2 to yield a carbenium ion intermediate, which can be attacked by H(2)O to yield a styrenyl quinolone containing a C3'-hydroxyprenyl chain. The FAD-dependent monooxygenase asqG performs epoxidation of the terminal C7'-C8' olefin. Finally, after dehydratation of the epoxide at C3 by asqC, the quinolone epoxide rearrangement protein asqO catalyzes an enzymatic 3-exo-tet cyclization to yield the cyclopropyl-THF ring system in aspoquinolone. This chain is Nonribosomal peptide synthetase asqK, found in Emericella nidulans (strain FGSC A4 / ATCC 38163 / CBS 112.46 / NRRL 194 / M139) (Aspergillus nidulans).